Here is a 126-residue protein sequence, read N- to C-terminus: Holo-[acyl-carrier-protein] synthase (126 aa).

Positions 8 and 56 each coordinate Mg(2+).

Belongs to the P-Pant transferase superfamily. AcpS family. Mg(2+) serves as cofactor.

The protein localises to the cytoplasm. The catalysed reaction is apo-[ACP] + CoA = holo-[ACP] + adenosine 3',5'-bisphosphate + H(+). Functionally, transfers the 4'-phosphopantetheine moiety from coenzyme A to a Ser of acyl-carrier-protein. This chain is Holo-[acyl-carrier-protein] synthase, found in Clostridium tetani (strain Massachusetts / E88).